The following is a 452-amino-acid chain: GPI mannosyltransferase 2 (452 aa).

Topologically, residues 1 to 7 (MMEKVTK) are cytoplasmic. The helical transmembrane segment at 8–28 (LALTSRVMVLVVQLLANFATP) threads the bilayer. Residues 29–113 (DHKPDVFRMP…HLGIPLSRDA (85 aa)) lie on the Lumenal side of the membrane. Residues 114–134 (LILLVAVALNVLIFCKTANVL) traverse the membrane as a helical segment. At 135 to 161 (YKLTQRMFNDHNKSWNAALIFCFNPAS) the chain is on the cytoplasmic side. The chain crosses the membrane as a helical span at residues 162–182 (IFFSAAYSETFFAFASFSLML). The Lumenal segment spans residues 183-209 (ECMRSEKDFRTFRLGAALTGCFVCRSN). A helical membrane pass occupies residues 210–230 (GLLTLGFPLYFLARHILLSTG). At 231 to 238 (SVQRCWQL) the chain is on the cytoplasmic side. The chain crosses the membrane as a helical span at residues 239 to 259 (FKMGLAMLVALGILHTYYFYI). Topologically, residues 260-284 (YRLYCLPDVKVQHAQHVVDYAKERS) are lumenal. A helical membrane pass occupies residues 285–305 (FLISGQASVGSPWCGYTLPFP). Residues 306-327 (YTYVQSHYWDVGFLRYYKWKQL) lie on the Cytoplasmic side of the membrane. A helical transmembrane segment spans residues 328–348 (PNFLLALPMLLFMHWHCYDYI). The Lumenal segment spans residues 349–370 (RKLVANTWSKISPSEYQGILKE). A helical membrane pass occupies residues 371–391 (HISFPFVLHAAVLTLVCTLYV). The Cytoplasmic segment spans residues 392–398 (HIQVSTR). The chain crosses the membrane as a helical span at residues 399 to 419 (LLASATPVFYWFAADYMPNTF). Over 420 to 426 (QLSFRSK) the chain is Lumenal. A helical transmembrane segment spans residues 427–447 (AGVLFIWCLTYSLVGTVLFSN). The Cytoplasmic segment spans residues 448–452 (NYPWT).

Belongs to the PIGV family.

The protein localises to the endoplasmic reticulum membrane. Its pathway is glycolipid biosynthesis; glycosylphosphatidylinositol-anchor biosynthesis. Its function is as follows. Mannosyltransferase involved in glycosylphosphatidylinositol-anchor biosynthesis. Transfers the second mannose to the glycosylphosphatidylinositol during GPI precursor assembly. Required for the GPI-mediated endoplasmic reticulum exit and proper targeting to the cell surface of chp. Required for GPI-mediated membrane attachment of chp, qsm and Cont. Essential for microvillar stability in the rhabdomere. This chain is GPI mannosyltransferase 2, found in Drosophila pseudoobscura pseudoobscura (Fruit fly).